Here is a 206-residue protein sequence, read N- to C-terminus: Small ribosomal subunit protein uS4 (206 aa).

The S4 RNA-binding domain maps to 96–156 (GRLDNVVYRM…EKSKKQARIK (61 aa)).

This sequence belongs to the universal ribosomal protein uS4 family. Part of the 30S ribosomal subunit. Contacts protein S5. The interaction surface between S4 and S5 is involved in control of translational fidelity.

In terms of biological role, one of the primary rRNA binding proteins, it binds directly to 16S rRNA where it nucleates assembly of the body of the 30S subunit. Its function is as follows. With S5 and S12 plays an important role in translational accuracy. The chain is Small ribosomal subunit protein uS4 from Haemophilus influenzae (strain ATCC 51907 / DSM 11121 / KW20 / Rd).